Here is a 477-residue protein sequence, read N- to C-terminus: Dihydrolipoyl dehydrogenase (477 aa).

FAD contacts are provided by residues 34–49 (EKYK…GGTC), Lys-58, and Gly-122. An intrachain disulfide couples Cys-49 to Cys-54. Residues 188–192 (GAGVI), Glu-211, Val-245, and 276–279 (AVGR) contribute to the NAD(+) site. Residues Asp-319 and Ala-327 each coordinate FAD. Catalysis depends on His-451, which acts as the Proton acceptor.

The protein belongs to the class-I pyridine nucleotide-disulfide oxidoreductase family. In terms of assembly, homodimer. FAD is required as a cofactor.

It localises to the cytoplasm. The catalysed reaction is N(6)-[(R)-dihydrolipoyl]-L-lysyl-[protein] + NAD(+) = N(6)-[(R)-lipoyl]-L-lysyl-[protein] + NADH + H(+). Its function is as follows. The pyruvate dehydrogenase complex catalyzes the overall conversion of pyruvate to acetyl-CoA and CO(2). It contains multiple copies of three enzymatic components: pyruvate dehydrogenase (E1), dihydrolipoamide acetyltransferase (E2) and lipoamide dehydrogenase (E3). This is Dihydrolipoyl dehydrogenase from Azotobacter vinelandii.